A 213-amino-acid polypeptide reads, in one-letter code: Large ribosomal subunit protein bL25 (213 aa).

The protein belongs to the bacterial ribosomal protein bL25 family. CTC subfamily. As to quaternary structure, part of the 50S ribosomal subunit; part of the 5S rRNA/L5/L18/L25 subcomplex. Contacts the 5S rRNA. Binds to the 5S rRNA independently of L5 and L18.

Its function is as follows. This is one of the proteins that binds to the 5S RNA in the ribosome where it forms part of the central protuberance. This is Large ribosomal subunit protein bL25 from Mesorhizobium japonicum (strain LMG 29417 / CECT 9101 / MAFF 303099) (Mesorhizobium loti (strain MAFF 303099)).